The chain runs to 317 residues: Transaldolase (317 aa).

Lys132 serves as the catalytic Schiff-base intermediate with substrate.

This sequence belongs to the transaldolase family. Type 1 subfamily. Homodimer.

It localises to the cytoplasm. It catalyses the reaction D-sedoheptulose 7-phosphate + D-glyceraldehyde 3-phosphate = D-erythrose 4-phosphate + beta-D-fructose 6-phosphate. It functions in the pathway carbohydrate degradation; pentose phosphate pathway; D-glyceraldehyde 3-phosphate and beta-D-fructose 6-phosphate from D-ribose 5-phosphate and D-xylulose 5-phosphate (non-oxidative stage): step 2/3. Its function is as follows. Transaldolase is important for the balance of metabolites in the pentose-phosphate pathway. The sequence is that of Transaldolase from Histophilus somni (strain 2336) (Haemophilus somnus).